The following is a 623-amino-acid chain: AM-toxin biosynthesis protein 12-2 (623 aa).

The interval 110 to 129 is disordered; the sequence is TIPGTSQAKNTEPDHQASGL.

Its pathway is mycotoxin biosynthesis. Its function is as follows. Part of the gene clusters that mediate the biosynthesis of AM-toxins, host-selective toxins (HSTs) causing Alternaria blotch on apple, a worldwide distributed disease. AM-toxins are cyclic depsipeptides containing the 3 residues 2-hydroxy-isovaleric acid (2-HIV), dehydroalanine, L-alanine which are common for all 3 AM-toxins I to III. The fourth precursor is L-alpha-amino-methoxyphenyl-valeric acid (L-Amv) for AM-toxin I, L-alpha-amino-phenyl-valeric acid (L-Apv) for AM-toxin II, and L-alpha-amino-hydroxyphenyl-valeric acid (L-Ahv) for AM-toxin III. AM-toxins have two target sites for affecting susceptible apple cells; they cause invagination of the plasma membrane and electrolyte loss and chloroplast disorganization. The non-ribosomal peptide synthetase AMT1 contains 4 catalytic modules and is responsible for activation of each residue in AM-toxin. The aldo-keto reductase AMT2 catalyzes the conversion of 2-keto-isovaleric acid (2-KIV) to 2-hydroxy-isovaleric acid (2-HIV), one of the precursor residues incorporated by AMT1 during AM-toxin biosynthesis, by reduction of its ketone to an alcohol. The cytochrome P450 monooxygenase AMT3 and the thioesterase AMT4 are also important for AM-toxin production, but their exact function within the AM-toxin biosynthesis are not known yet. Up to 21 proteins (including AMT1 to AMT4) are predicted to be involved in AM-toxin biosynthesis since their expression ishighly up-regulated in AM-toxin-producing cultures. The protein is AM-toxin biosynthesis protein 12-2 of Alternaria alternata (Alternaria rot fungus).